A 40-amino-acid chain; its full sequence is uncharacterized protein (40 aa).

Residues 1-17 (MAVAALAMYGGTCGACA) form the signal peptide.

This is an uncharacterized protein from Archaeoglobus fulgidus (strain ATCC 49558 / DSM 4304 / JCM 9628 / NBRC 100126 / VC-16).